Reading from the N-terminus, the 65-residue chain is Large ribosomal subunit protein bL35 (65 aa).

The disordered stretch occupies residues 1–22; sequence MPKMKTKSSAKKRFKVTGSGKI.

This sequence belongs to the bacterial ribosomal protein bL35 family.

The chain is Large ribosomal subunit protein bL35 from Flavobacterium psychrophilum (strain ATCC 49511 / DSM 21280 / CIP 103535 / JIP02/86).